The chain runs to 142 residues: Hdr-like menaquinol oxidoreductase cytochrome c subunit (142 aa).

The Cytoplasmic portion of the chain corresponds to 1–6; the sequence is MYNKKY. The chain crosses the membrane as a helical span at residues 7 to 27; it reads VIPLILVFLIGFFTPYWYNAM. Residues 28 to 142 are Extracellular-facing; it reads AGTLGHVPTL…GIEELSKYFS (115 aa). Positions 93, 96, 97, 104, 107, 108, 117, 120, and 121 each coordinate heme.

Consists of five subunits: an integral membrane subunit, a cytochrome b-like subunit, a cytochrome c subunit and two iron-sulfur subunits. Post-translationally, binds 3 heme groups per subunit.

It is found in the cell membrane. In terms of biological role, has menaquinol-oxidizing activity. HmeA, HmeB and HmeE subunits may together catalyze electron transfer from menaquinol to cytochrome c. In Archaeoglobus fulgidus (strain ATCC 49558 / DSM 4304 / JCM 9628 / NBRC 100126 / VC-16), this protein is Hdr-like menaquinol oxidoreductase cytochrome c subunit (hmeE).